Consider the following 345-residue polypeptide: Myb/SANT-like DNA-binding domain-containing protein 4 (345 aa).

The Myb-like domain occupies 4–77 (LKRKRKSNFS…EVKRRYLDWR (74 aa)). Lys9 participates in a covalent cross-link: Glycyl lysine isopeptide (Lys-Gly) (interchain with G-Cter in SUMO2). Ser106 carries the post-translational modification Phosphoserine. Glycyl lysine isopeptide (Lys-Gly) (interchain with G-Cter in SUMO2) cross-links involve residues Lys114 and Lys142. Residues 143–175 (VEEEERDPQSPEFEIEEEEEMLSSVIPDSRREN) are disordered. Thr188 is modified (phosphothreonine). A coiled-coil region spans residues 203–345 (LLVNIEKQKL…LRIQKEGHLQ (143 aa)). Glycyl lysine isopeptide (Lys-Gly) (interchain with G-Cter in SUMO2) cross-links involve residues Lys237, Lys254, and Lys273.

This Homo sapiens (Human) protein is Myb/SANT-like DNA-binding domain-containing protein 4 (MSANTD4).